Reading from the N-terminus, the 911-residue chain is Probable 2-oxoadipate dehydrogenase complex component E1 homolog (911 aa).

Belongs to the alpha-ketoglutarate dehydrogenase family. Thiamine diphosphate serves as cofactor.

It is found in the mitochondrion. The catalysed reaction is N(6)-[(R)-lipoyl]-L-lysyl-[protein] + 2-oxoadipate + H(+) = N(6)-[(R)-S(8)-glutaryldihydrolipoyl]-L-lysyl-[protein] + CO2. 2-oxoadipate dehydrogenase (E1a) component of the 2-oxoadipate dehydrogenase complex (OADHC). Participates in the first step, rate limiting for the overall conversion of 2-oxoadipate (alpha-ketoadipate) to glutaryl-CoA and CO(2) catalyzed by the whole OADHC. Catalyzes the irreversible decarboxylation of 2-oxoadipate via the thiamine diphosphate (ThDP) cofactor and subsequent transfer of the decarboxylated acyl intermediate on an oxidized dihydrolipoyl group that is covalently amidated to the E2 enzyme (dihydrolipoyllysine-residue succinyltransferase or DLST). The polypeptide is Probable 2-oxoadipate dehydrogenase complex component E1 homolog (Caenorhabditis elegans).